A 709-amino-acid polypeptide reads, in one-letter code: Polyribonucleotide nucleotidyltransferase (709 aa).

Mg(2+)-binding residues include Asp489 and Asp495. Residues 556–615 (PKIDMIKIDVDKIKVVIGKGGETIDKIIAETGVKIDIDEEGNVSIFSSDQAAIDRTKDII) form the KH domain. In terms of domain architecture, S1 motif spans 625–693 (GEVYHAKVVR…DKGRVDASMK (69 aa)).

Belongs to the polyribonucleotide nucleotidyltransferase family. It depends on Mg(2+) as a cofactor.

It is found in the cytoplasm. It catalyses the reaction RNA(n+1) + phosphate = RNA(n) + a ribonucleoside 5'-diphosphate. Its function is as follows. Involved in mRNA degradation. Catalyzes the phosphorolysis of single-stranded polyribonucleotides processively in the 3'- to 5'-direction. This is Polyribonucleotide nucleotidyltransferase from Streptococcus agalactiae serotype III (strain NEM316).